A 275-amino-acid chain; its full sequence is Large ribosomal subunit protein uL2 (275 aa).

2 disordered regions span residues 28 to 49 and 224 to 246; these read APHAALVESQSRSGGRNHHGRI and AMNPVDHPHGGGEAKAGQGNPHP.

Belongs to the universal ribosomal protein uL2 family. Part of the 50S ribosomal subunit. Forms a bridge to the 30S subunit in the 70S ribosome.

One of the primary rRNA binding proteins. Required for association of the 30S and 50S subunits to form the 70S ribosome, for tRNA binding and peptide bond formation. It has been suggested to have peptidyltransferase activity; this is somewhat controversial. Makes several contacts with the 16S rRNA in the 70S ribosome. The sequence is that of Large ribosomal subunit protein uL2 from Stenotrophomonas maltophilia (strain R551-3).